The primary structure comprises 128 residues: Small ribosomal subunit protein eS8 (128 aa).

This sequence belongs to the eukaryotic ribosomal protein eS8 family. As to quaternary structure, part of the 30S ribosomal subunit.

This chain is Small ribosomal subunit protein eS8, found in Methanococcus maripaludis (strain C7 / ATCC BAA-1331).